We begin with the raw amino-acid sequence, 142 residues long: Large ribosomal subunit protein uL11 (142 aa).

The protein belongs to the universal ribosomal protein uL11 family. Part of the ribosomal stalk of the 50S ribosomal subunit. Interacts with L10 and the large rRNA to form the base of the stalk. L10 forms an elongated spine to which L12 dimers bind in a sequential fashion forming a multimeric L10(L12)X complex. In terms of processing, one or more lysine residues are methylated.

Functionally, forms part of the ribosomal stalk which helps the ribosome interact with GTP-bound translation factors. The sequence is that of Large ribosomal subunit protein uL11 from Gamma-proteobacterium EBAC31A08.